The primary structure comprises 92 residues: Large ribosomal subunit protein bL25 (92 aa).

This sequence belongs to the bacterial ribosomal protein bL25 family. As to quaternary structure, part of the 50S ribosomal subunit; part of the 5S rRNA/L5/L18/L25 subcomplex. Contacts the 5S rRNA. Binds to the 5S rRNA independently of L5 and L18.

Functionally, this is one of the proteins that binds to the 5S RNA in the ribosome where it forms part of the central protuberance. In Vibrio campbellii (strain ATCC BAA-1116), this protein is Large ribosomal subunit protein bL25.